The primary structure comprises 263 residues: Acyl-[acyl-carrier-protein]--UDP-N-acetylglucosamine O-acyltransferase (263 aa).

This sequence belongs to the transferase hexapeptide repeat family. LpxA subfamily. In terms of assembly, homotrimer.

The protein resides in the cytoplasm. The enzyme catalyses a (3R)-hydroxyacyl-[ACP] + UDP-N-acetyl-alpha-D-glucosamine = a UDP-3-O-[(3R)-3-hydroxyacyl]-N-acetyl-alpha-D-glucosamine + holo-[ACP]. Its pathway is glycolipid biosynthesis; lipid IV(A) biosynthesis; lipid IV(A) from (3R)-3-hydroxytetradecanoyl-[acyl-carrier-protein] and UDP-N-acetyl-alpha-D-glucosamine: step 1/6. Functionally, involved in the biosynthesis of lipid A, a phosphorylated glycolipid that anchors the lipopolysaccharide to the outer membrane of the cell. This is Acyl-[acyl-carrier-protein]--UDP-N-acetylglucosamine O-acyltransferase from Campylobacter jejuni subsp. doylei (strain ATCC BAA-1458 / RM4099 / 269.97).